The primary structure comprises 381 residues: Guanine nucleotide-binding protein G(s) subunit alpha (381 aa).

Cysteine 3 is lipidated: S-palmitoyl cysteine. In terms of domain architecture, G-alpha spans 36-381; that stretch reads ALHRLLLLGA…RMHLQKYELL (346 aa). The interval 39–52 is G1 motif; it reads RLLLLGAGESGKST. GTP contacts are provided by residues 44-51, 183-189, 208-212, 277-280, and alanine 353; these read GAGESGKS, LRCRVLT, GVGGQ, and NKQD. The Mg(2+) site is built by serine 51 and threonine 189. The tract at residues 181 to 189 is G2 motif; that stretch reads DILRCRVLT. A G3 motif region spans residues 204 to 213; that stretch reads FYMFGVGGQR. The tract at residues 273-280 is G4 motif; sequence ILFLNKQD. A G5 motif region spans residues 351–356; sequence TTAVDT.

It belongs to the G-alpha family. G(s) subfamily. In terms of assembly, g proteins are composed of 3 units; alpha, beta and gamma. The alpha chain contains the guanine nucleotide binding site.

Guanine nucleotide-binding proteins (G proteins) are involved as modulators or transducers in various transmembrane signaling systems. The G(s) protein is involved in hormonal regulation of adenylate cyclase: it activates the cyclase in response to beta-adrenergic stimuli. The polypeptide is Guanine nucleotide-binding protein G(s) subunit alpha (Geodia cydonium (Sponge)).